We begin with the raw amino-acid sequence, 358 residues long: Probable RNA methyltransferase MXAN_6459 (358 aa).

E92 functions as the Proton acceptor in the catalytic mechanism. Residues F99–K327 form the Radical SAM core domain. A disulfide bond links C106 and C333. [4Fe-4S] cluster-binding residues include C113, C117, and C120. Residues G160–E161, S192, S215–T217, and D289 each bind S-adenosyl-L-methionine. The active-site S-methylcysteine intermediate is C333.

Belongs to the radical SAM superfamily. RlmN family. [4Fe-4S] cluster serves as cofactor.

Its subcellular location is the cytoplasm. This chain is Probable RNA methyltransferase MXAN_6459, found in Myxococcus xanthus (strain DK1622).